The following is a 144-amino-acid chain: 3-dehydroquinate dehydratase (144 aa).

The active-site Proton acceptor is Y24. Residues N76, H82, and D89 each coordinate substrate. H102 functions as the Proton donor in the catalytic mechanism. Residues 103-104 and R113 contribute to the substrate site; that span reads LS.

This sequence belongs to the type-II 3-dehydroquinase family. As to quaternary structure, homododecamer.

It catalyses the reaction 3-dehydroquinate = 3-dehydroshikimate + H2O. It functions in the pathway metabolic intermediate biosynthesis; chorismate biosynthesis; chorismate from D-erythrose 4-phosphate and phosphoenolpyruvate: step 3/7. Functionally, catalyzes a trans-dehydration via an enolate intermediate. This Bordetella avium (strain 197N) protein is 3-dehydroquinate dehydratase.